The chain runs to 245 residues: Syntaxin-61 (245 aa).

The Cytoplasmic segment spans residues 1–224; it reads MSSAQDPFYI…VMKKAGAKGQ (224 aa). Residues 153-215 enclose the t-SNARE coiled-coil homology domain; that stretch reads MLLIKQQDEE…EFVQKKVGMV (63 aa). A helical; Anchor for type IV membrane protein transmembrane segment spans residues 225-245; sequence MMMICFLLVLFIILFVLVFLT.

It belongs to the syntaxin family. In terms of assembly, interacts with VTI12 and either SYP41, SYP42 or SYP51 in the trans-Golgi network or with VTI11 and SYP51 in the prevacuolar compartment to form t-SNARE complexes. Core constituent of the SNARE complex required for membrane fusion at the trans-Golgi network. Also observed in the SYP121-complex and cellulose synthases. Colocalizes with PIP2-7 and SYP121 in trafficking vesicles and at the plasma membrane. Interacts with SYP121 and PIP2-7. Expressed in root, leaf, stem, flower and silique, but not in hypocotyl or young leaf. Strong expression in the vasculature and in guard cells of the leaf epidermis.

The protein resides in the golgi apparatus. It is found in the trans-Golgi network membrane. The protein localises to the prevacuolar compartment membrane. Its function is as follows. Vesicle trafficking protein that functions in the secretory pathway; the fusion of phospholipid vesicles containing SYP61 and VTI12 is triggered by YKT61 and YKT62. Together with VTI12, required for membrane fusion. Involved in osmotic stress tolerance and in abscisic acid (ABA) regulation of stomatal responses. Plays a role in the exocytic trafficking of cellulose synthases (CESAs) and the transport of cell wall components to the plasma membrane. Together with SYP121, regulates the post-Golgi trafficking of the aquaporin PIP2-7 to the plasma membrane, thus modulating cell membrane water permeability. The polypeptide is Syntaxin-61 (Arabidopsis thaliana (Mouse-ear cress)).